We begin with the raw amino-acid sequence, 745 residues long: Elongation factor G, mitochondrial (745 aa).

Positions 40–317 (EKIRNIGISA…AVLDYLPNPG (278 aa)) constitute a tr-type G domain. Residues 49 to 56 (AHIDSGKT), 116 to 120 (DTPGH), and 170 to 173 (NKLD) each bind GTP.

It belongs to the TRAFAC class translation factor GTPase superfamily. Classic translation factor GTPase family. EF-G/EF-2 subfamily.

It is found in the mitochondrion. The protein operates within protein biosynthesis; polypeptide chain elongation. In terms of biological role, mitochondrial GTPase that catalyzes the GTP-dependent ribosomal translocation step during translation elongation. During this step, the ribosome changes from the pre-translocational (PRE) to the post-translocational (POST) state as the newly formed A-site-bound peptidyl-tRNA and P-site-bound deacylated tRNA move to the P and E sites, respectively. Catalyzes the coordinated movement of the two tRNA molecules, the mRNA and conformational changes in the ribosome. Essential during development as it acts as a retrograde signal from mitochondria to the nucleus to slow down cell proliferation if mitochondrial energy output is low. This Drosophila willistoni (Fruit fly) protein is Elongation factor G, mitochondrial.